Here is a 215-residue protein sequence, read N- to C-terminus: Pyrrolidone-carboxylate peptidase (215 aa).

Active-site residues include E80, C143, and H167.

This sequence belongs to the peptidase C15 family. In terms of assembly, homotetramer.

The protein resides in the cytoplasm. The enzyme catalyses Release of an N-terminal pyroglutamyl group from a polypeptide, the second amino acid generally not being Pro.. Removes 5-oxoproline from various penultimate amino acid residues except L-proline. The chain is Pyrrolidone-carboxylate peptidase from Bacillus cereus (strain G9842).